Here is a 230-residue protein sequence, read N- to C-terminus: MKFFALTTLLAATASALPTSNPAQELEARQLGRTTRDDLINGNSASCRDVIFIYARGSTETGNLGTLGPSIASNLESAFGKDGVWIQGVGGAYRATLGDNALPRGTSSAAIREMLGLFQQANTKCPDATLIAGGYSQGAALAAASIEDLDSAIRDKIAGTVLFGYTKNLQNRGRIPNYPADRTKVFCNTGDLVCTGSLIVAAPHLAYGPDARGPAPEFLIEKVRAVRGSA.

Positions 1–16 (MKFFALTTLLAATASA) are cleaved as a signal peptide. Residues 17-31 (LPTSNPAQELEARQL) constitute a propeptide that is removed on maturation. Gly-32 carries the N-D-glucuronoyl glycine modification. A disulfide bridge links Cys-47 with Cys-125. Catalysis depends on Ser-136, which acts as the Nucleophile. Cys-187 and Cys-194 are joined by a disulfide. Asp-191 is a catalytic residue. Catalysis depends on His-204, which acts as the Proton donor/acceptor.

This sequence belongs to the cutinase family. The 2 disulfide bonds play a critical role in holding the catalytic residues in juxta-position; reduction of the disulfide bridges results in the complete inactivation of the enzyme. In terms of processing, O-glycosylated; contains one mole each of mannose, arabinose, N-acetylglucosamine, and glucuronic acid.

The protein localises to the secreted. The catalysed reaction is cutin + H2O = cutin monomers.. Its activity is regulated as follows. Inhibited by n-undecyl phosphonate (C11Y4). Inhibited by paraoxon. Functionally, catalyzes the hydrolysis of complex carboxylic polyesters found in the cell wall of plants. Degrades cutin, a macromolecule that forms the structure of the plant cuticle. Allows pathogenic fungi to penetrate through the cuticular barrier into the host plant during the initial stage of fungal infection. In Fusarium vanettenii (Neocosmospora pisi), this protein is Cutinase 1 (CUT1).